The primary structure comprises 498 residues: Diacylglycerol O-acyltransferase 1 (498 aa).

The segment at 1 to 66 (MGDRGGAGSS…AHTRDKDRQT (66 aa)) is disordered. The Cytoplasmic segment spans residues 1 to 92 (MGDRGGAGSS…SLFSSDSGFS (92 aa)). The tract at residues 1–96 (MGDRGGAGSS…SDSGFSNYRG (96 aa)) is involved in homomerization. A Phosphoserine modification is found at serine 20. The span at 58–68 (HTRDKDRQTSV) shows a compositional bias: basic and acidic residues. Residues 93–127 (NYRGILNWCVVMLILSNARLSLENLIKYGILVDPI) traverse the membrane as a helical segment. Residues 128–139 (QVVSLFLKDPYS) lie on the Lumenal side of the membrane. Positions 128 to 139 (QVVSLFLKDPYS) are extracellular loop 1 (EL1). A helical membrane pass occupies residues 140-165 (WPAPCLIIASNIFIVATFQIEKRLSV). The interval 140 to 498 (WPAPCLIIAS…VLNYDAPVGA (359 aa)) is MBOAT fold. Residues 166–170 (GALTE) lie on the Cytoplasmic side of the membrane. Residues 171–193 (QMGLLLHVVNLATIICFPAAVAL) form a helical membrane-spanning segment. The Lumenal segment spans residues 194–200 (LVESITP). A helical membrane pass occupies residues 201 to 232 (VGSLFALASYSIIFLKLSSYRDVNLWCRQRRV). Residues 233 to 284 (KAKAVSAGKKVSGAAAQNTVSYPDNLTYRDLYYFIFAPTLCYELNFPRSPRI) lie on the Cytoplasmic side of the membrane. Residues 235–287 (KAVSAGKKVSGAAAQNTVSYPDNLTYRDLYYFIFAPTLCYELNFPRSPRIRKR) form an intracellular loop 1 (IL1) region. A helical membrane pass occupies residues 285-319 (RKRFLLRRVLEMLFFTQLQVGLIQQWMVPTIQNSM). The Lumenal segment spans residues 320–326 (KPFKDMD). A helical transmembrane segment spans residues 327-364 (YSRIIERLLKLAVPNHLIWLIFFYWLFHSCLNAVAELL). At 365-410 (QFGDREFYRDWWNAESVTYFWQNWNIPVHKWCIRHFYKPMLRLGSN) the chain is on the cytoplasmic side. The segment at 365–410 (QFGDREFYRDWWNAESVTYFWQNWNIPVHKWCIRHFYKPMLRLGSN) is intracellular loop 2 (IL2). Residues 371 to 377 (FYRDWWN) carry the FYXDWWN motif motif. Residues 385–393 (WQNWNIPVH), tyrosine 401, and arginine 415 each bind an acyl-CoA. Residues 391-405 (PVHKWCIRHFYKPML) form an amphipathic helix (AH) region. Residues 411-431 (KWMARTGVFWASAFFHEYLVS) traverse the membrane as a helical segment. The active site involves histidine 426. The Lumenal segment spans residues 432 to 439 (IPLRMFRL). The chain crosses the membrane as a helical span at residues 440-458 (WAFTAMMAQVPLAWIVNRF). The Cytoplasmic segment spans residues 459-460 (FQ). The helical transmembrane segment at 461–492 (GNYGNAAVWVTLIIGQPVAVLMYVHDYYVLNY) threads the bilayer. Tyrosine 488 is an an acyl-CoA binding site. The Lumenal segment spans residues 493 to 498 (DAPVGA).

This sequence belongs to the membrane-bound acyltransferase family. Sterol o-acyltransferase subfamily. Homodimer or homotetramer; both forms have similar enzymatic activities.

It localises to the endoplasmic reticulum membrane. The catalysed reaction is an acyl-CoA + a 1,2-diacyl-sn-glycerol = a triacyl-sn-glycerol + CoA. It carries out the reaction all-trans-retinol + an acyl-CoA = an all-trans-retinyl ester + CoA. It catalyses the reaction 2-(9Z-octadecenoyl)-glycerol + (9Z)-octadecenoyl-CoA = 1,2-di-(9Z-octadecenoyl)-sn-glycerol + CoA. The enzyme catalyses 1,2-di-(9Z-octadecenoyl)-sn-glycerol + (9Z)-octadecenoyl-CoA = 1,2,3-tri-(9Z-octadecenoyl)-glycerol + CoA. The catalysed reaction is all-trans-retinol + hexadecanoyl-CoA = all-trans-retinyl hexadecanoate + CoA. It carries out the reaction 1-O-(9Z-octadecenyl)-glycerol + (9Z)-octadecenoyl-CoA = 1-O-(9Z-octadecyl)-3-(9Z-octadecenoyl)-glycerol + CoA. It catalyses the reaction 1-O-(9Z-octadecyl)-3-(9Z-octadecenoyl)-glycerol + (9Z)-octadecenoyl-CoA = 1-O-(9Z-octadecenyl)-2,3-di-(9Z-octadecenoyl)glycerol + CoA. The enzyme catalyses 1-(9Z-octadecenoyl)-glycerol + (9Z)-octadecenoyl-CoA = 1,2-di-(9Z-octadecenoyl)-glycerol + CoA. The catalysed reaction is 1,2-di-(9Z-octadecenoyl)-glycerol + (9Z)-octadecenoate + H(+) = 1,2,3-tri-(9Z-octadecenoyl)-glycerol + H2O. It carries out the reaction 1-octadecanoyl-2-(5Z,8Z,11Z,14Z-eicosatetraenoyl)-sn-glycerol + (9Z)-octadecenoyl-CoA = 1-octadecanoyl-2-(5Z,8Z,11Z,14Z)-eicosatetraenoyl-3-(9Z)-octadecenoyl-sn-glycerol + CoA. It catalyses the reaction hexadecane-1,2-diol + 2 hexadecanoyl-CoA = 1,2-O,O-dihexadecanoyl-1,2-hexadecanediol + 2 CoA. The enzyme catalyses hexadecane-1,2-diol + hexadecanoyl-CoA = 2-hydroxyhexadecyl hexadecanoate + CoA. The catalysed reaction is 2-(9Z-octadecenoyl)-glycerol + hexadecanoyl-CoA = 1-hexadecanoyl-2-(9Z-octadecenoyl)-sn-glycerol + CoA. It carries out the reaction 1,2-di-(9Z-octadecenoyl)-sn-glycerol + hexadecanoyl-CoA = 1,2-di-(9Z)-octadecenoyl-3-hexadecanoyl-sn-glycerol + CoA. It catalyses the reaction hexadecan-1-ol + hexadecanoyl-CoA = hexadecanyl hexadecanoate + CoA. The enzyme catalyses 13-cis-retinol + hexadecanoyl-CoA = 13-cis-retinyl hexadecanoate + CoA. The catalysed reaction is 1,3-di-(9Z-octadecenoyl)-glycerol + (9Z)-octadecenoyl-CoA = 1,2,3-tri-(9Z-octadecenoyl)-glycerol + CoA. It carries out the reaction 2,3-di-(9Z)-octadecenoyl-sn-glycerol + (9Z)-octadecenoyl-CoA = 1,2,3-tri-(9Z-octadecenoyl)-glycerol + CoA. It participates in lipid metabolism; glycerolipid metabolism. Functionally, catalyzes the terminal and only committed step in triacylglycerol synthesis by using diacylglycerol and fatty acyl CoA as substrates. Highly expressed in epithelial cells of the small intestine and its activity is essential for the absorption of dietary fats. In liver, plays a role in esterifying exogenous fatty acids to glycerol, and is required to synthesize fat for storage. Also present in female mammary glands, where it produces fat in the milk. May be involved in VLDL (very low density lipoprotein) assembly. In contrast to DGAT2 it is not essential for survival. Functions as the major acyl-CoA retinol acyltransferase (ARAT) in the skin, where it acts to maintain retinoid homeostasis and prevent retinoid toxicity leading to skin and hair disorders. Exhibits additional acyltransferase activities, includin acyl CoA:monoacylglycerol acyltransferase (MGAT), wax monoester and wax diester synthases. Also able to use 1-monoalkylglycerol (1-MAkG) as an acyl acceptor for the synthesis of monoalkyl-monoacylglycerol (MAMAG). This is Diacylglycerol O-acyltransferase 1 from Rattus norvegicus (Rat).